The following is a 457-amino-acid chain: tRNA-2-methylthio-N(6)-dimethylallyladenosine synthase (457 aa).

The MTTase N-terminal domain maps to Lys3–Ala120. [4Fe-4S] cluster contacts are provided by Cys12, Cys49, Cys83, Cys157, Cys161, and Cys164. The 235-residue stretch at Arg143–Arg377 folds into the Radical SAM core domain. The TRAM domain occupies Gln380–Ile447.

It belongs to the methylthiotransferase family. MiaB subfamily. As to quaternary structure, monomer. [4Fe-4S] cluster is required as a cofactor.

The protein localises to the cytoplasm. The catalysed reaction is N(6)-dimethylallyladenosine(37) in tRNA + (sulfur carrier)-SH + AH2 + 2 S-adenosyl-L-methionine = 2-methylsulfanyl-N(6)-dimethylallyladenosine(37) in tRNA + (sulfur carrier)-H + 5'-deoxyadenosine + L-methionine + A + S-adenosyl-L-homocysteine + 2 H(+). Functionally, catalyzes the methylthiolation of N6-(dimethylallyl)adenosine (i(6)A), leading to the formation of 2-methylthio-N6-(dimethylallyl)adenosine (ms(2)i(6)A) at position 37 in tRNAs that read codons beginning with uridine. The polypeptide is tRNA-2-methylthio-N(6)-dimethylallyladenosine synthase (Burkholderia cenocepacia (strain ATCC BAA-245 / DSM 16553 / LMG 16656 / NCTC 13227 / J2315 / CF5610) (Burkholderia cepacia (strain J2315))).